The sequence spans 98 residues: Large ribosomal subunit protein uL23 (98 aa).

The protein belongs to the universal ribosomal protein uL23 family. In terms of assembly, part of the 50S ribosomal subunit. Contacts protein L29, and trigger factor when it is bound to the ribosome.

Its function is as follows. One of the early assembly proteins it binds 23S rRNA. One of the proteins that surrounds the polypeptide exit tunnel on the outside of the ribosome. Forms the main docking site for trigger factor binding to the ribosome. This is Large ribosomal subunit protein uL23 from Caulobacter sp. (strain K31).